The chain runs to 562 residues: Extracellular matrix protein 1 (562 aa).

Positions 1-19 (MGTIRSSALILACLALASA) are cleaved as a signal peptide. Disordered stretches follow at residues 46 to 87 (GYAA…SSPE) and 119 to 171 (QKEQ…WNPA). The segment covering 129 to 154 (IEQKEIDPPVQHQEEIVQSRQKEEKP) has biased composition (basic and acidic residues). 2 consecutive repeat copies span residues 172 to 301 (RHCQ…RPDY) and 305 to 427 (PCPI…YPNY). The segment at 172–427 (RHCQQGRRGI…FAHLAPYPNY (256 aa)) is 2 X approximate repeats. Residues N376, N466, and N538 are each glycosylated (N-linked (GlcNAc...) asparagine). A disordered region spans residues 539–562 (ATGLGQQGPTGGTNVGPAPGSKEE). Over residues 543 to 552 (GQQGPTGGTN) the composition is skewed to gly residues. Position 559 is a phosphoserine (S559).

In terms of assembly, interacts (via C-terminus) with HSPG2 (via C-terminus). Interacts with EFEMP1/FBLN3 and LAMB3. Interacts with MMP9.

The protein resides in the secreted. The protein localises to the extracellular space. Its subcellular location is the extracellular matrix. Functionally, involved in endochondral bone formation as negative regulator of bone mineralization. Stimulates the proliferation of endothelial cells and promotes angiogenesis. Inhibits MMP9 proteolytic activity. This Rattus norvegicus (Rat) protein is Extracellular matrix protein 1 (Ecm1).